The chain runs to 791 residues: Sphingomyelin phosphodiesterase 4 (791 aa).

The chain crosses the membrane as a helical span at residues 755 to 775; sequence LFALLSFGLFSSTGLILIISF.

Mg(2+) serves as cofactor.

The protein resides in the endoplasmic reticulum membrane. The protein localises to the golgi apparatus membrane. It is found in the nucleus envelope. It localises to the cell membrane. Its subcellular location is the sarcolemma. The catalysed reaction is a sphingomyelin + H2O = phosphocholine + an N-acylsphing-4-enine + H(+). Its function is as follows. Catalyzes the hydrolysis of membrane sphingomyelin to form phosphorylcholine and ceramide. It has a relevant role in the homeostasis of membrane sphingolipids, thereby influencing membrane integrity, and endoplasmic reticulum organization and function. May sensitize cells to DNA damage-induced apoptosis. The protein is Sphingomyelin phosphodiesterase 4 (smpd4) of Danio rerio (Zebrafish).